The following is a 222-amino-acid chain: Uracil-DNA glycosylase (222 aa).

The active-site Proton acceptor is the D61.

It belongs to the uracil-DNA glycosylase (UDG) superfamily. UNG family.

It localises to the cytoplasm. The enzyme catalyses Hydrolyzes single-stranded DNA or mismatched double-stranded DNA and polynucleotides, releasing free uracil.. In terms of biological role, excises uracil residues from the DNA which can arise as a result of misincorporation of dUMP residues by DNA polymerase or due to deamination of cytosine. The sequence is that of Uracil-DNA glycosylase from Aeromonas salmonicida (strain A449).